The chain runs to 498 residues: MAKSNSKDIVLIGAGVLSTTFGSMLKEIEPDWNIHVYERLDRPAIESSNERNNAGTGHAALCELNYTVLQPDGSIDIEKAKVINEEFEISKQFWGHLVKSGSIENPREFINPLPHISYVRGKNNVKFLKDRYEAMKAFPMFDNIEYTEDIEVMKKWIPLMMKGREDNPGIMAASKIDEGTDVNFGELTRKMAKSIEAHPNATVQFNHEVVDFEQLSNGQWEVTVKNRLTGEKFKQVTDYVFIGAGGGAIPLLQKTGIPESKHLGGFPISGQFLACTNPQVIEQHDAKVYGKEPPGTPPMTVPHLDTRYIDGQRTLLFGPFANVGPKFLKNGSNLDLFKSVKTYNITTLLAAAVKNLPLIKYSFDQVIMTKEGCMNHLRTFYPEARNEDWQLYTAGKRVQVIKDTPEHGKGFIQFGTEVVNSQDHTVIALLGESPGASTSVSVALEVLERNFPEYKTEWAPKIKKMIPSYGESLIEDEKLMRKIRKQTSKDLELGYYEN.

It belongs to the MQO family. It depends on FAD as a cofactor.

The catalysed reaction is (S)-malate + a quinone = a quinol + oxaloacetate. It participates in carbohydrate metabolism; tricarboxylic acid cycle; oxaloacetate from (S)-malate (quinone route): step 1/1. The sequence is that of Probable malate:quinone oxidoreductase 2 from Staphylococcus aureus (strain COL).